Reading from the N-terminus, the 350-residue chain is tRNA uridine(34) hydroxylase (350 aa).

The Rhodanese domain maps to 146–240 (DDPDALFIDM…YARKARDQGL (95 aa)). Catalysis depends on Cys-200, which acts as the Cysteine persulfide intermediate.

Belongs to the TrhO family.

The catalysed reaction is uridine(34) in tRNA + AH2 + O2 = 5-hydroxyuridine(34) in tRNA + A + H2O. Its function is as follows. Catalyzes oxygen-dependent 5-hydroxyuridine (ho5U) modification at position 34 in tRNAs, the first step in 5-carboxymethoxyuridine (cmo5U) biosynthesis. May be part of an alternate pathway, which is able to bypass cmo5U biogenesis in a subset of tRNAs under aerobic conditions. The polypeptide is tRNA uridine(34) hydroxylase (Escherichia coli O6:K15:H31 (strain 536 / UPEC)).